We begin with the raw amino-acid sequence, 266 residues long: Ras-like protein family member 12 (266 aa).

GTP-binding positions include 27–34 (GRRGAGKS), 74–78 (DTADL), and 134–137 (NKLD).

This sequence belongs to the small GTPase superfamily. Ras family.

It carries out the reaction GTP + H2O = GDP + phosphate + H(+). This Bos taurus (Bovine) protein is Ras-like protein family member 12 (RASL12).